The primary structure comprises 537 residues: Tyrosine-protein kinase fyna (537 aa).

Gly2 carries the N-myristoyl glycine lipid modification. 2 S-palmitoyl cysteine lipidation sites follow: Cys3 and Cys6. Thr12 is modified (phosphothreonine; by PKC). A disordered region spans residues 13-34 (KLTDERETSVSQHAGYRYGSDP). An SH3 domain is found at 82-143 (TGVTLFVALY…PSNYVAPVDS (62 aa)). The 98-residue stretch at 149-246 (WYFGKLGRKD…GLCCRLIVPC (98 aa)) folds into the SH2 domain. Residues 271–524 (LQLIKRLGNG…YLQAFLEDYF (254 aa)) enclose the Protein kinase domain. ATP-binding positions include 277-285 (LGNGQFGEV) and Lys299. The active-site Proton acceptor is Asp390. Tyr420 bears the Phosphotyrosine; by autocatalysis mark. Tyr531 carries the phosphotyrosine modification.

This sequence belongs to the protein kinase superfamily. Tyr protein kinase family. SRC subfamily. Mn(2+) serves as cofactor. In terms of tissue distribution, widely expressed.

Its subcellular location is the cytoplasm. The protein localises to the nucleus. It catalyses the reaction L-tyrosyl-[protein] + ATP = O-phospho-L-tyrosyl-[protein] + ADP + H(+). Its activity is regulated as follows. Inhibited by phosphorylation of Tyr-531 by leukocyte common antigen and activated by dephosphorylation of this site. Relatively inactive in the unfertilized oocyte, undergoes rapid activation immediately following fertilization. Total activity increases progressively during later development and remains elevated during sphere and epiboly stage. In terms of biological role, tyrosine-protein kinase implicated in the control of cell growth. Plays a role in the regulation of intracellular calcium levels. Required in brain development and mature brain function with important roles in the regulation of axon growth, axon guidance, and neurite extension. Role in cntn1-mediated signaling. Required for convergent extension cell movements during gastrulation, acting with yes via rhoa. May be required for epiboly to occur, possibly through its effects in calcium signaling. The polypeptide is Tyrosine-protein kinase fyna (fyna) (Danio rerio (Zebrafish)).